Reading from the N-terminus, the 79-residue chain is ATP synthase subunit c (79 aa).

Helical transmembrane passes span 11-31 and 55-75; these read ISAA…IGIL and IVMG…LYLI.

Belongs to the ATPase C chain family. F-type ATPases have 2 components, F(1) - the catalytic core - and F(0) - the membrane proton channel. F(1) has five subunits: alpha(3), beta(3), gamma(1), delta(1), epsilon(1). F(0) has three main subunits: a(1), b(2) and c(10-14). The alpha and beta chains form an alternating ring which encloses part of the gamma chain. F(1) is attached to F(0) by a central stalk formed by the gamma and epsilon chains, while a peripheral stalk is formed by the delta and b chains.

It localises to the cell membrane. F(1)F(0) ATP synthase produces ATP from ADP in the presence of a proton or sodium gradient. F-type ATPases consist of two structural domains, F(1) containing the extramembraneous catalytic core and F(0) containing the membrane proton channel, linked together by a central stalk and a peripheral stalk. During catalysis, ATP synthesis in the catalytic domain of F(1) is coupled via a rotary mechanism of the central stalk subunits to proton translocation. Functionally, key component of the F(0) channel; it plays a direct role in translocation across the membrane. A homomeric c-ring of between 10-14 subunits forms the central stalk rotor element with the F(1) delta and epsilon subunits. This Wigglesworthia glossinidia brevipalpis protein is ATP synthase subunit c.